The following is a 900-amino-acid chain: Phosphoenolpyruvate carboxylase (900 aa).

Active-site residues include histidine 140 and lysine 568.

It belongs to the PEPCase type 1 family. Requires Mg(2+) as cofactor.

The catalysed reaction is oxaloacetate + phosphate = phosphoenolpyruvate + hydrogencarbonate. Forms oxaloacetate, a four-carbon dicarboxylic acid source for the tricarboxylic acid cycle. This Neisseria meningitidis serogroup A / serotype 4A (strain DSM 15465 / Z2491) protein is Phosphoenolpyruvate carboxylase.